The chain runs to 61 residues: Small ribosomal subunit protein uS14 (61 aa).

4 residues coordinate Zn(2+): Cys24, Cys27, Cys40, and Cys43.

Belongs to the universal ribosomal protein uS14 family. Zinc-binding uS14 subfamily. Part of the 30S ribosomal subunit. Contacts proteins S3 and S10. Zn(2+) is required as a cofactor.

In terms of biological role, binds 16S rRNA, required for the assembly of 30S particles and may also be responsible for determining the conformation of the 16S rRNA at the A site. The chain is Small ribosomal subunit protein uS14 from Limosilactobacillus fermentum (strain NBRC 3956 / LMG 18251) (Lactobacillus fermentum).